Here is a 177-residue protein sequence, read N- to C-terminus: Co-chaperone protein HscB homolog (177 aa).

The J domain occupies 8–80 (DFFALFGLPR…LPRAQYMLEL (73 aa)).

This sequence belongs to the HscB family. Interacts with HscA and stimulates its ATPase activity.

Co-chaperone involved in the maturation of iron-sulfur cluster-containing proteins. Seems to help targeting proteins to be folded toward HscA. This chain is Co-chaperone protein HscB homolog, found in Aromatoleum aromaticum (strain DSM 19018 / LMG 30748 / EbN1) (Azoarcus sp. (strain EbN1)).